The following is a 222-amino-acid chain: N-(5'-phosphoribosyl)anthranilate isomerase (222 aa).

This sequence belongs to the TrpF family.

The catalysed reaction is N-(5-phospho-beta-D-ribosyl)anthranilate = 1-(2-carboxyphenylamino)-1-deoxy-D-ribulose 5-phosphate. It participates in amino-acid biosynthesis; L-tryptophan biosynthesis; L-tryptophan from chorismate: step 3/5. This chain is N-(5'-phosphoribosyl)anthranilate isomerase, found in Rhizobium rhizogenes (strain K84 / ATCC BAA-868) (Agrobacterium radiobacter).